The chain runs to 102 residues: NADH-quinone oxidoreductase subunit K (102 aa).

Helical transmembrane passes span 5–25 (LGHY…GIFL), 31–51 (IVLL…FVAF), and 62–82 (VFVF…LAIL).

The protein belongs to the complex I subunit 4L family. As to quaternary structure, NDH-1 is composed of 14 different subunits. Subunits NuoA, H, J, K, L, M, N constitute the membrane sector of the complex.

Its subcellular location is the cell inner membrane. It carries out the reaction a quinone + NADH + 5 H(+)(in) = a quinol + NAD(+) + 4 H(+)(out). Functionally, NDH-1 shuttles electrons from NADH, via FMN and iron-sulfur (Fe-S) centers, to quinones in the respiratory chain. The immediate electron acceptor for the enzyme in this species is believed to be ubiquinone. Couples the redox reaction to proton translocation (for every two electrons transferred, four hydrogen ions are translocated across the cytoplasmic membrane), and thus conserves the redox energy in a proton gradient. The protein is NADH-quinone oxidoreductase subunit K of Methylibium petroleiphilum (strain ATCC BAA-1232 / LMG 22953 / PM1).